Reading from the N-terminus, the 624-residue chain is Dihydroxy-acid dehydratase (624 aa).

Residue D81 coordinates Mg(2+). Residue C122 coordinates [2Fe-2S] cluster. Residues D123 and K124 each contribute to the Mg(2+) site. An N6-carboxylysine modification is found at K124. Residue C195 coordinates [2Fe-2S] cluster. A Mg(2+)-binding site is contributed by E499. S525 serves as the catalytic Proton acceptor.

This sequence belongs to the IlvD/Edd family. In terms of assembly, homodimer. [2Fe-2S] cluster serves as cofactor. Mg(2+) is required as a cofactor.

The enzyme catalyses (2R)-2,3-dihydroxy-3-methylbutanoate = 3-methyl-2-oxobutanoate + H2O. The catalysed reaction is (2R,3R)-2,3-dihydroxy-3-methylpentanoate = (S)-3-methyl-2-oxopentanoate + H2O. Its pathway is amino-acid biosynthesis; L-isoleucine biosynthesis; L-isoleucine from 2-oxobutanoate: step 3/4. It participates in amino-acid biosynthesis; L-valine biosynthesis; L-valine from pyruvate: step 3/4. Its function is as follows. Functions in the biosynthesis of branched-chain amino acids. Catalyzes the dehydration of (2R,3R)-2,3-dihydroxy-3-methylpentanoate (2,3-dihydroxy-3-methylvalerate) into 2-oxo-3-methylpentanoate (2-oxo-3-methylvalerate) and of (2R)-2,3-dihydroxy-3-methylbutanoate (2,3-dihydroxyisovalerate) into 2-oxo-3-methylbutanoate (2-oxoisovalerate), the penultimate precursor to L-isoleucine and L-valine, respectively. This chain is Dihydroxy-acid dehydratase, found in Shewanella baltica (strain OS155 / ATCC BAA-1091).